The chain runs to 129 residues: Trefoil factor 2 (129 aa).

A signal peptide spans 1–23; that stretch reads MGPRGAPLLAVVLVLGLHALVEG. P-type domains lie at 29-73 and 79-122; these read CRCS…FHPL and EQCV…FFPQ. Intrachain disulfides connect C29–C127, C31–C58, C42–C57, C52–C69, C81–C107, C91–C106, and C101–C118.

In terms of tissue distribution, stomach and pancreas.

It is found in the secreted. Functionally, inhibits gastrointestinal motility and gastric acid secretion. Could function as a structural component of gastric mucus, possibly by stabilizing glycoproteins in the mucus gel through interactions with carbohydrate side chains. This chain is Trefoil factor 2 (Tff2), found in Mus musculus (Mouse).